The chain runs to 144 residues: Nucleoside diphosphate kinase (144 aa).

Lys5, Phe53, Arg81, Thr87, Arg98, and Asn108 together coordinate ATP. The active-site Pros-phosphohistidine intermediate is His111.

This sequence belongs to the NDK family. It depends on Mg(2+) as a cofactor.

The enzyme catalyses a 2'-deoxyribonucleoside 5'-diphosphate + ATP = a 2'-deoxyribonucleoside 5'-triphosphate + ADP. It carries out the reaction a ribonucleoside 5'-diphosphate + ATP = a ribonucleoside 5'-triphosphate + ADP. In terms of biological role, major role in the synthesis of nucleoside triphosphates other than ATP. The ATP gamma phosphate is transferred to the NDP beta phosphate via a ping-pong mechanism, using a phosphorylated active-site intermediate. This chain is Nucleoside diphosphate kinase, found in Solanum lycopersicum (Tomato).